Here is a 237-residue protein sequence, read N- to C-terminus: tRNA (guanine-N(7)-)-methyltransferase (237 aa).

S-adenosyl-L-methionine-binding residues include E65, E90, D117, and D140. The active site involves D140. Substrate is bound by residues K144, D176, and 212-215; that span reads TKFE. A disordered region spans residues 197-217; sequence TCGPRQFSPRGERPETKFERR. The span at 206-217 shows a compositional bias: basic and acidic residues; sequence RGERPETKFERR.

It belongs to the class I-like SAM-binding methyltransferase superfamily. TrmB family.

The enzyme catalyses guanosine(46) in tRNA + S-adenosyl-L-methionine = N(7)-methylguanosine(46) in tRNA + S-adenosyl-L-homocysteine. It functions in the pathway tRNA modification; N(7)-methylguanine-tRNA biosynthesis. Functionally, catalyzes the formation of N(7)-methylguanine at position 46 (m7G46) in tRNA. This Alkalilimnicola ehrlichii (strain ATCC BAA-1101 / DSM 17681 / MLHE-1) protein is tRNA (guanine-N(7)-)-methyltransferase.